The chain runs to 273 residues: ATP synthase subunit delta (273 aa).

The protein belongs to the ATPase delta chain family. F-type ATPases have 2 components, F(1) - the catalytic core - and F(0) - the membrane proton channel. F(1) has five subunits: alpha(3), beta(3), gamma(1), delta(1), epsilon(1). F(0) has three main subunits: a(1), b(2) and c(10-14). The alpha and beta chains form an alternating ring which encloses part of the gamma chain. F(1) is attached to F(0) by a central stalk formed by the gamma and epsilon chains, while a peripheral stalk is formed by the delta and b chains.

It is found in the cell membrane. F(1)F(0) ATP synthase produces ATP from ADP in the presence of a proton or sodium gradient. F-type ATPases consist of two structural domains, F(1) containing the extramembraneous catalytic core and F(0) containing the membrane proton channel, linked together by a central stalk and a peripheral stalk. During catalysis, ATP synthesis in the catalytic domain of F(1) is coupled via a rotary mechanism of the central stalk subunits to proton translocation. Its function is as follows. This protein is part of the stalk that links CF(0) to CF(1). It either transmits conformational changes from CF(0) to CF(1) or is implicated in proton conduction. In Streptomyces avermitilis (strain ATCC 31267 / DSM 46492 / JCM 5070 / NBRC 14893 / NCIMB 12804 / NRRL 8165 / MA-4680), this protein is ATP synthase subunit delta.